Here is a 156-residue protein sequence, read N- to C-terminus: 6,7-dimethyl-8-ribityllumazine synthase (156 aa).

5-amino-6-(D-ribitylamino)uracil contacts are provided by residues Phe22, 56–58, and 80–82; these read AFE and VVI. 85–86 contributes to the (2S)-2-hydroxy-3-oxobutyl phosphate binding site; that stretch reads ST. The active-site Proton donor is the His88. Phe113 contacts 5-amino-6-(D-ribitylamino)uracil. Arg127 provides a ligand contact to (2S)-2-hydroxy-3-oxobutyl phosphate.

It belongs to the DMRL synthase family.

The catalysed reaction is (2S)-2-hydroxy-3-oxobutyl phosphate + 5-amino-6-(D-ribitylamino)uracil = 6,7-dimethyl-8-(1-D-ribityl)lumazine + phosphate + 2 H2O + H(+). It functions in the pathway cofactor biosynthesis; riboflavin biosynthesis; riboflavin from 2-hydroxy-3-oxobutyl phosphate and 5-amino-6-(D-ribitylamino)uracil: step 1/2. In terms of biological role, catalyzes the formation of 6,7-dimethyl-8-ribityllumazine by condensation of 5-amino-6-(D-ribitylamino)uracil with 3,4-dihydroxy-2-butanone 4-phosphate. This is the penultimate step in the biosynthesis of riboflavin. This is 6,7-dimethyl-8-ribityllumazine synthase from Streptococcus agalactiae serotype Ia (strain ATCC 27591 / A909 / CDC SS700).